Here is a 100-residue protein sequence, read N- to C-terminus: Small ribosomal subunit protein uS14 (100 aa).

Belongs to the universal ribosomal protein uS14 family. Part of the 30S ribosomal subunit. Contacts proteins S3 and S10.

Its function is as follows. Binds 16S rRNA, required for the assembly of 30S particles and may also be responsible for determining the conformation of the 16S rRNA at the A site. The chain is Small ribosomal subunit protein uS14 from Prochlorococcus marinus (strain MIT 9215).